Reading from the N-terminus, the 326-residue chain is Tetraacyldisaccharide 4'-kinase (326 aa).

58-65 contributes to the ATP binding site; that stretch reads SVGGNGKT.

This sequence belongs to the LpxK family.

The enzyme catalyses a lipid A disaccharide + ATP = a lipid IVA + ADP + H(+). The protein operates within glycolipid biosynthesis; lipid IV(A) biosynthesis; lipid IV(A) from (3R)-3-hydroxytetradecanoyl-[acyl-carrier-protein] and UDP-N-acetyl-alpha-D-glucosamine: step 6/6. In terms of biological role, transfers the gamma-phosphate of ATP to the 4'-position of a tetraacyldisaccharide 1-phosphate intermediate (termed DS-1-P) to form tetraacyldisaccharide 1,4'-bis-phosphate (lipid IVA). The sequence is that of Tetraacyldisaccharide 4'-kinase from Pseudoalteromonas translucida (strain TAC 125).